The sequence spans 573 residues: Sulfite reductase [NADPH] hemoprotein beta-component (573 aa).

The disordered stretch occupies residues 1-20 (MAKVELKAPDGPPSDVERIK). [4Fe-4S] cluster is bound by residues cysteine 438, cysteine 444, cysteine 483, and cysteine 487. Cysteine 487 is a binding site for siroheme.

The protein belongs to the nitrite and sulfite reductase 4Fe-4S domain family. As to quaternary structure, alpha(8)-beta(8). The alpha component is a flavoprotein, the beta component is a hemoprotein. It depends on siroheme as a cofactor. The cofactor is [4Fe-4S] cluster.

It catalyses the reaction hydrogen sulfide + 3 NADP(+) + 3 H2O = sulfite + 3 NADPH + 4 H(+). It participates in sulfur metabolism; hydrogen sulfide biosynthesis; hydrogen sulfide from sulfite (NADPH route): step 1/1. Component of the sulfite reductase complex that catalyzes the 6-electron reduction of sulfite to sulfide. This is one of several activities required for the biosynthesis of L-cysteine from sulfate. In Geobacillus kaustophilus (strain HTA426), this protein is Sulfite reductase [NADPH] hemoprotein beta-component.